The following is a 283-amino-acid chain: Thymidylate synthase (283 aa).

Residue arginine 22 coordinates dUMP. Cysteine 160 acts as the Nucleophile in catalysis. DUMP is bound by residues 180–183 (RSCD), asparagine 191, and 221–223 (HIY). Aspartate 183 lines the (6R)-5,10-methylene-5,6,7,8-tetrahydrofolate pocket. Residue serine 282 participates in (6R)-5,10-methylene-5,6,7,8-tetrahydrofolate binding.

Belongs to the thymidylate synthase family. Bacterial-type ThyA subfamily. In terms of assembly, homodimer.

The protein resides in the cytoplasm. It carries out the reaction dUMP + (6R)-5,10-methylene-5,6,7,8-tetrahydrofolate = 7,8-dihydrofolate + dTMP. It functions in the pathway pyrimidine metabolism; dTTP biosynthesis. Its function is as follows. Catalyzes the reductive methylation of 2'-deoxyuridine-5'-monophosphate (dUMP) to 2'-deoxythymidine-5'-monophosphate (dTMP) while utilizing 5,10-methylenetetrahydrofolate (mTHF) as the methyl donor and reductant in the reaction, yielding dihydrofolate (DHF) as a by-product. This enzymatic reaction provides an intracellular de novo source of dTMP, an essential precursor for DNA biosynthesis. The sequence is that of Thymidylate synthase from Photobacterium profundum (strain SS9).